Consider the following 257-residue polypeptide: 4-chloro-allylglycine synthase (257 aa).

Residues Glu-112, His-119, Glu-173, His-203, Glu-207, and His-210 each contribute to the Fe cation site.

Requires Fe(2+) as cofactor.

The catalysed reaction is 4-chloro-L-lysine + AH2 + O2 = L-2-amino-4-chloropent-4-enoate + formaldehyde + A + NH4(+) + H2O. Its pathway is amino-acid metabolism. It participates in antibiotic biosynthesis. In terms of biological role, involved in the biosynthesis of terminal alkyne-containing amino acids such as L-propargylglycine (Pra) and L-beta-ethynylserine, that are produced as antibiotics by S.cattleya. Catalyzes an oxidative C-C bond cleavage in 4-chloro-L-lysine to form 4-chloro-allyl-L-glycine (also named L-2-amino-4-chloropent-4-enoate), with release of formaldehyde and ammonia. Is also able to react with L-lysine directly to produce allylglycine in vitro. In Streptantibioticus cattleyicolor (strain ATCC 35852 / DSM 46488 / JCM 4925 / NBRC 14057 / NRRL 8057) (Streptomyces cattleya), this protein is 4-chloro-allylglycine synthase.